The sequence spans 488 residues: Adenylosuccinate synthetase 1, chloroplastic (488 aa).

The N-terminal 47 residues, 1-47 (MSLSTVNHAAAAAAAAAGPGKSFSAAAPAAPSVRLPRTRAPAAAAVS), are a transit peptide targeting the chloroplast. GTP is bound by residues 75–81 (GDEGKGK) and 103–105 (GHT). D76 serves as the catalytic Proton acceptor. Mg(2+) contacts are provided by D76 and G103. IMP-binding positions include 76–79 (DEGK), 101–104 (NAGH), T193, R207, Q287, T302, and R366. Catalysis depends on H104, which acts as the Proton donor. 362-368 (TTTGRPR) contributes to the substrate binding site. GTP contacts are provided by residues R368, 394 to 396 (KLD), and 477 to 479 (GVG).

This sequence belongs to the adenylosuccinate synthetase family. In terms of assembly, homodimer. Requires Mg(2+) as cofactor.

It localises to the plastid. The protein localises to the chloroplast. It carries out the reaction IMP + L-aspartate + GTP = N(6)-(1,2-dicarboxyethyl)-AMP + GDP + phosphate + 2 H(+). The protein operates within purine metabolism; AMP biosynthesis via de novo pathway; AMP from IMP: step 1/2. Plays an important role in the de novo pathway and in the salvage pathway of purine nucleotide biosynthesis. Catalyzes the first committed step in the biosynthesis of AMP from IMP. This is Adenylosuccinate synthetase 1, chloroplastic from Oryza sativa subsp. japonica (Rice).